The chain runs to 85 residues: Large ribosomal subunit protein bL27 (85 aa).

Residues 1–10 (MAQKKGGGST) are compositionally biased toward gly residues. Residues 1-21 (MAQKKGGGSTRNGRDSQPKML) form a disordered region.

The protein belongs to the bacterial ribosomal protein bL27 family.

The chain is Large ribosomal subunit protein bL27 from Leptothrix cholodnii (strain ATCC 51168 / LMG 8142 / SP-6) (Leptothrix discophora (strain SP-6)).